Reading from the N-terminus, the 580-residue chain is Arginine--tRNA ligase (580 aa).

The short motif at 131–141 (ANPTGPMHVGH) is the 'HIGH' region element.

Belongs to the class-I aminoacyl-tRNA synthetase family. In terms of assembly, monomer.

Its subcellular location is the cytoplasm. It catalyses the reaction tRNA(Arg) + L-arginine + ATP = L-arginyl-tRNA(Arg) + AMP + diphosphate. In Cereibacter sphaeroides (strain ATCC 17023 / DSM 158 / JCM 6121 / CCUG 31486 / LMG 2827 / NBRC 12203 / NCIMB 8253 / ATH 2.4.1.) (Rhodobacter sphaeroides), this protein is Arginine--tRNA ligase.